The sequence spans 179 residues: Large ribosomal subunit protein uL6 (179 aa).

Belongs to the universal ribosomal protein uL6 family. Part of the 50S ribosomal subunit.

Its function is as follows. This protein binds to the 23S rRNA, and is important in its secondary structure. It is located near the subunit interface in the base of the L7/L12 stalk, and near the tRNA binding site of the peptidyltransferase center. This chain is Large ribosomal subunit protein uL6, found in Nocardia farcinica (strain IFM 10152).